Consider the following 729-residue polypeptide: Fatty acid oxidation complex subunit alpha (729 aa).

The enoyl-CoA hydratase/isomerase stretch occupies residues 1–189 (MLYKGDTLYV…KIGLIDGIVK (189 aa)). Asp-296 contacts substrate. The tract at residues 311–729 (EMPKQAAVLG…ARPVGALKTA (419 aa)) is 3-hydroxyacyl-CoA dehydrogenase. NAD(+)-binding positions include Met-324, Asp-343, 400 to 402 (VVE), Lys-407, and Ser-429. The active-site For 3-hydroxyacyl-CoA dehydrogenase activity is His-450. Residue Asn-453 coordinates NAD(+). Residues Asn-500 and Tyr-660 each coordinate substrate. The tract at residues 708–729 (RHNEPYYPPVEPARPVGALKTA) is disordered.

It in the N-terminal section; belongs to the enoyl-CoA hydratase/isomerase family. This sequence in the C-terminal section; belongs to the 3-hydroxyacyl-CoA dehydrogenase family. As to quaternary structure, heterotetramer of two alpha chains (FadB) and two beta chains (FadA).

It carries out the reaction a (3S)-3-hydroxyacyl-CoA + NAD(+) = a 3-oxoacyl-CoA + NADH + H(+). The catalysed reaction is a (3S)-3-hydroxyacyl-CoA = a (2E)-enoyl-CoA + H2O. It catalyses the reaction a 4-saturated-(3S)-3-hydroxyacyl-CoA = a (3E)-enoyl-CoA + H2O. The enzyme catalyses (3S)-3-hydroxybutanoyl-CoA = (3R)-3-hydroxybutanoyl-CoA. It carries out the reaction a (3Z)-enoyl-CoA = a 4-saturated (2E)-enoyl-CoA. The catalysed reaction is a (3E)-enoyl-CoA = a 4-saturated (2E)-enoyl-CoA. Its pathway is lipid metabolism; fatty acid beta-oxidation. Functionally, involved in the aerobic and anaerobic degradation of long-chain fatty acids via beta-oxidation cycle. Catalyzes the formation of 3-oxoacyl-CoA from enoyl-CoA via L-3-hydroxyacyl-CoA. It can also use D-3-hydroxyacyl-CoA and cis-3-enoyl-CoA as substrate. The sequence is that of Fatty acid oxidation complex subunit alpha from Enterobacter sp. (strain 638).